Here is a 278-residue protein sequence, read N- to C-terminus: Diaminopimelate epimerase (278 aa).

Residues asparagine 13, glutamine 46, and asparagine 65 each contribute to the substrate site. Cysteine 74 serves as the catalytic Proton donor. Substrate is bound by residues glycine 75 to asparagine 76, asparagine 157, asparagine 190, and glutamate 208 to arginine 209. Cysteine 217 acts as the Proton acceptor in catalysis. Position 218–219 (glycine 218–threonine 219) interacts with substrate.

It belongs to the diaminopimelate epimerase family. In terms of assembly, homodimer.

The protein localises to the cytoplasm. The catalysed reaction is (2S,6S)-2,6-diaminopimelate = meso-2,6-diaminopimelate. The protein operates within amino-acid biosynthesis; L-lysine biosynthesis via DAP pathway; DL-2,6-diaminopimelate from LL-2,6-diaminopimelate: step 1/1. Functionally, catalyzes the stereoinversion of LL-2,6-diaminopimelate (L,L-DAP) to meso-diaminopimelate (meso-DAP), a precursor of L-lysine and an essential component of the bacterial peptidoglycan. The protein is Diaminopimelate epimerase of Magnetococcus marinus (strain ATCC BAA-1437 / JCM 17883 / MC-1).